Reading from the N-terminus, the 250-residue chain is Ubiquinone/menaquinone biosynthesis C-methyltransferase UbiE (250 aa).

Residues threonine 73, aspartate 94, 122 to 123 (NA), and serine 139 each bind S-adenosyl-L-methionine.

The protein belongs to the class I-like SAM-binding methyltransferase superfamily. MenG/UbiE family.

The catalysed reaction is a 2-demethylmenaquinol + S-adenosyl-L-methionine = a menaquinol + S-adenosyl-L-homocysteine + H(+). It catalyses the reaction a 2-methoxy-6-(all-trans-polyprenyl)benzene-1,4-diol + S-adenosyl-L-methionine = a 5-methoxy-2-methyl-3-(all-trans-polyprenyl)benzene-1,4-diol + S-adenosyl-L-homocysteine + H(+). The protein operates within quinol/quinone metabolism; menaquinone biosynthesis; menaquinol from 1,4-dihydroxy-2-naphthoate: step 2/2. Its pathway is cofactor biosynthesis; ubiquinone biosynthesis. Its function is as follows. Methyltransferase required for the conversion of demethylmenaquinol (DMKH2) to menaquinol (MKH2) and the conversion of 2-polyprenyl-6-methoxy-1,4-benzoquinol (DDMQH2) to 2-polyprenyl-3-methyl-6-methoxy-1,4-benzoquinol (DMQH2). This chain is Ubiquinone/menaquinone biosynthesis C-methyltransferase UbiE, found in Francisella tularensis subsp. tularensis (strain FSC 198).